The sequence spans 106 residues: Nucleoid-associated protein XOO1065 (106 aa).

A compositionally biased stretch (basic and acidic residues) spans 80 to 89 (KIDAESKDRM). Residues 80–106 (KIDAESKDRMGSATAGMQLPPGMKLPF) are disordered.

It belongs to the YbaB/EbfC family. Homodimer.

Its subcellular location is the cytoplasm. The protein resides in the nucleoid. Functionally, binds to DNA and alters its conformation. May be involved in regulation of gene expression, nucleoid organization and DNA protection. This is Nucleoid-associated protein XOO1065 from Xanthomonas oryzae pv. oryzae (strain KACC10331 / KXO85).